Consider the following 403-residue polypeptide: ATP phosphoribosyltransferase regulatory subunit (403 aa).

Belongs to the class-II aminoacyl-tRNA synthetase family. HisZ subfamily. As to quaternary structure, heteromultimer composed of HisG and HisZ subunits.

The protein resides in the cytoplasm. It participates in amino-acid biosynthesis; L-histidine biosynthesis; L-histidine from 5-phospho-alpha-D-ribose 1-diphosphate: step 1/9. In terms of biological role, required for the first step of histidine biosynthesis. May allow the feedback regulation of ATP phosphoribosyltransferase activity by histidine. This Crocosphaera subtropica (strain ATCC 51142 / BH68) (Cyanothece sp. (strain ATCC 51142)) protein is ATP phosphoribosyltransferase regulatory subunit.